The chain runs to 322 residues: ATP-dependent 6-phosphofructokinase (322 aa).

Gly11 contacts ATP. 21–25 (RAVVR) lines the ADP pocket. ATP-binding positions include 72–73 (RC) and 102–105 (GDGS). Residue Asp103 participates in Mg(2+) binding. A substrate-binding site is contributed by 127–129 (TID). Asp129 acts as the Proton acceptor in catalysis. Arg156 lines the ADP pocket. Residues Arg164 and 171 to 173 (MGR) each bind substrate. Residues 187–189 (GAE), Arg213, and 215–217 (KKH) each bind ADP. Substrate contacts are provided by residues Glu224, Arg245, and 251–254 (HIQR).

It belongs to the phosphofructokinase type A (PFKA) family. ATP-dependent PFK group I subfamily. Prokaryotic clade 'B1' sub-subfamily. Homotetramer. Mg(2+) is required as a cofactor.

It localises to the cytoplasm. The catalysed reaction is beta-D-fructose 6-phosphate + ATP = beta-D-fructose 1,6-bisphosphate + ADP + H(+). It functions in the pathway carbohydrate degradation; glycolysis; D-glyceraldehyde 3-phosphate and glycerone phosphate from D-glucose: step 3/4. With respect to regulation, allosterically activated by ADP and other diphosphonucleosides, and allosterically inhibited by phosphoenolpyruvate. Functionally, catalyzes the phosphorylation of D-fructose 6-phosphate to fructose 1,6-bisphosphate by ATP, the first committing step of glycolysis. The polypeptide is ATP-dependent 6-phosphofructokinase (Staphylococcus carnosus (strain TM300)).